A 322-amino-acid chain; its full sequence is Phospholipase A1 (322 aa).

Positions 1–18 (MNFKYSILFICFGTLDRG) are cleaved as a signal peptide. Cysteines 23 and 106 form a disulfide. Residue Ser156 is the Nucleophile of the active site. Asp184 functions as the Charge relay system in the catalytic mechanism. 2 cysteine pairs are disulfide-bonded: Cys195/Cys200 and Cys238/Cys246. His248 (charge relay system) is an active-site residue. 3 cysteine pairs are disulfide-bonded: Cys263-Cys290, Cys264-Cys315, and Cys283-Cys288.

It belongs to the AB hydrolase superfamily. Lipase family. In terms of processing, contains six disulfide bonds. Is not glycosylated. As to expression, expressed by the venom gland.

Its subcellular location is the secreted. The enzyme catalyses a 1,2-diacyl-sn-glycero-3-phosphocholine + H2O = a 2-acyl-sn-glycero-3-phosphocholine + a fatty acid + H(+). Functionally, catalyzes the hydrolysis of phosphatidylcholine with phospholipase A1 activity. Shows hemolytic activity. Acts as an allergen. This chain is Phospholipase A1, found in Polybia paulista (Neotropical social wasp).